The primary structure comprises 205 residues: Guanylate kinase (205 aa).

Residues 3 to 183 (GFVLLISGPS…SYEALRAILI (181 aa)) enclose the Guanylate kinase-like domain. 10–17 (GPSGAGKS) serves as a coordination point for ATP.

This sequence belongs to the guanylate kinase family.

The protein localises to the cytoplasm. It carries out the reaction GMP + ATP = GDP + ADP. Its function is as follows. Essential for recycling GMP and indirectly, cGMP. The polypeptide is Guanylate kinase (Campylobacter jejuni (strain RM1221)).